The chain runs to 118 residues: Large ribosomal subunit protein bL19 (118 aa).

This sequence belongs to the bacterial ribosomal protein bL19 family.

Functionally, this protein is located at the 30S-50S ribosomal subunit interface and may play a role in the structure and function of the aminoacyl-tRNA binding site. This is Large ribosomal subunit protein bL19 from Frankia casuarinae (strain DSM 45818 / CECT 9043 / HFP020203 / CcI3).